A 956-amino-acid chain; its full sequence is F-box only protein 10 (956 aa).

In terms of domain architecture, F-box spans 1–48; sequence MEAGGLPLELWRMILAYLHLPDLGRCSLVCRAWYELILSLDSTRWRQL. PbH1 repeat units follow at residues 198-217 and 238-260; these read SGHV…QVHG and VPLC…TVEG. Positions 314–367 are disordered; sequence EGSQSPTSPASSSPKPGSKAGSQEAEVGSDGERVAQTPDSSDGGLSPSGEDEDE. 2 stretches are compositionally biased toward low complexity: residues 316–336 and 351–361; these read SQSP…AGSQ and PDSSDGGLSPS. Phosphoserine occurs at positions 321 and 326. 15 PbH1 repeats span residues 427 to 448, 449 to 470, 471 to 493, 494 to 516, 538 to 560, 561 to 583, 584 to 606, 607 to 629, 630 to 652, 653 to 675, 717 to 739, 740 to 762, 764 to 786, 787 to 809, and 832 to 854; these read VQGC…FVCS, HGRA…RCIH, NSKI…FLRL, EGGG…DIRK, LGNG…GIYI, LYHG…GIAV, NENG…GVDI, RRGG…GVVV, GDEG…GVWM, MSSS…GVAV, RPIT…GLYV, QSSE…GITV, QSSQ…GVKV, EAQC…GIIT, and LPRS…GIAV.

In terms of assembly, component of the SCF(FBXO10) complex consisting of CUL1, SKP1 and FBXO10. Interacts with BCL2. Interacts with PRDM1.

Its subcellular location is the cytoplasm. It functions in the pathway protein modification; protein ubiquitination. Functionally, substrate-recognition component of the SCF (SKP1-CUL1-F-box protein)-type E3 ubiquitin ligase complex. Mediates the ubiquitination and degradation of BCL2, an antiapoptotic protein, thereby playing a role in apoptosis by controlling the stability of BCL2. Targets also the receptor for advanced glycation end products RAGE for ubiquitination and subsequent lysosomal degradation. Directly controls HGAL/GCSAM ubiquitination and degradation and thereby decreases BCR signaling. The chain is F-box only protein 10 (FBXO10) from Homo sapiens (Human).